Consider the following 406-residue polypeptide: Bifunctional enzyme Fae/Hps (406 aa).

Residues 1 to 164 form a formaldehyde-activating enzyme region; it reads MSDIYEIGEA…AEKDRGTHPI (164 aa). The active-site Proton donor is histidine 20. Residues aspartate 22, leucine 51, lysine 69, threonine 71, and glutamine 86 each coordinate substrate. The segment at 165–406 is 3-hexulose-6-phosphate synthase; that stretch reads MGFKAMKLWN…RLALDEDEKI (242 aa).

In the N-terminal section; belongs to the formaldehyde-activating enzyme family. The protein in the C-terminal section; belongs to the HPS/KGPDC family. HPS subfamily.

The catalysed reaction is 5,6,7,8-tetrahydromethanopterin + formaldehyde = 5,10-methylenetetrahydromethanopterin + H2O. It catalyses the reaction D-ribulose 5-phosphate + formaldehyde = D-arabino-hex-3-ulose 6-phosphate. It functions in the pathway carbohydrate biosynthesis; D-ribose 5-phosphate biosynthesis. Its function is as follows. Catalyzes the condensation of formaldehyde with tetrahydromethanopterin (H(4)MPT) to 5,10-methylenetetrahydromethanopterin. In terms of biological role, catalyzes the reversible formation of ribulose-5-phosphate and formaldehyde from 3-hexulose-6-phosphate. The protein is Bifunctional enzyme Fae/Hps of Methanosphaera stadtmanae (strain ATCC 43021 / DSM 3091 / JCM 11832 / MCB-3).